The following is a 344-amino-acid chain: L-rhamnose-proton symporter (344 aa).

Transmembrane regions (helical) follow at residues Ala-4 to Ala-24, Trp-38 to Leu-58, Phe-68 to Ile-88, Met-101 to Ile-121, Thr-137 to Leu-157, Leu-175 to Ala-195, Leu-214 to Ile-234, Val-259 to Gly-279, Ile-290 to Leu-310, and Val-323 to Ala-343.

The protein belongs to the L-rhamnose transporter (TC 2.A.7.6) family.

It is found in the cell inner membrane. The catalysed reaction is L-rhamnopyranose(in) + H(+)(in) = L-rhamnopyranose(out) + H(+)(out). Its function is as follows. Uptake of L-rhamnose across the cytoplasmic membrane with the concomitant transport of protons into the cell (symport system). In Shigella sonnei (strain Ss046), this protein is L-rhamnose-proton symporter.